We begin with the raw amino-acid sequence, 236 residues long: Ubiquinone biosynthesis O-methyltransferase (236 aa).

Residues Arg39, Gly59, Asp80, and Met124 each contribute to the S-adenosyl-L-methionine site.

This sequence belongs to the methyltransferase superfamily. UbiG/COQ3 family.

The catalysed reaction is a 3-demethylubiquinol + S-adenosyl-L-methionine = a ubiquinol + S-adenosyl-L-homocysteine + H(+). It catalyses the reaction a 3-(all-trans-polyprenyl)benzene-1,2-diol + S-adenosyl-L-methionine = a 2-methoxy-6-(all-trans-polyprenyl)phenol + S-adenosyl-L-homocysteine + H(+). It functions in the pathway cofactor biosynthesis; ubiquinone biosynthesis. Functionally, O-methyltransferase that catalyzes the 2 O-methylation steps in the ubiquinone biosynthetic pathway. This chain is Ubiquinone biosynthesis O-methyltransferase, found in Shewanella halifaxensis (strain HAW-EB4).